A 636-amino-acid polypeptide reads, in one-letter code: uncharacterized protein (636 aa).

The segment at residues 10-36 (CLACRRKKVKCNRQYPCTRCLKYGEAC) is a DNA-binding region (zn(2)-C6 fungal-type). Residues 556–580 (NSQSTSEFVSPISDTENGSSSQQVS) show a composition bias toward polar residues. The segment at 556 to 581 (NSQSTSEFVSPISDTENGSSSQQVSE) is disordered.

The protein localises to the cytoplasm. It is found in the nucleus. This is an uncharacterized protein from Schizosaccharomyces pombe (strain 972 / ATCC 24843) (Fission yeast).